Here is a 58-residue protein sequence, read N- to C-terminus: Bestoxin (58 aa).

Residues 3-58 enclose the LCN-type CS-alpha/beta domain; it reads VPGNYPLDKDGNTYTCLELGENKDCQKVCKLHGVQYGYCYAFSCWCKEYLDDKDSV. 3 cysteine pairs are disulfide-bonded: Cys18–Cys41, Cys27–Cys46, and Cys31–Cys48.

As to expression, expressed by the venom gland.

It localises to the secreted. Its function is as follows. Beta toxins bind voltage-independently at site-4 of sodium channels (Nav) and shift the voltage of activation toward more negative potentials thereby affecting sodium channel activation and promoting spontaneous and repetitive firing. In mice, causes intense writhing. The polypeptide is Bestoxin (Parabuthus transvaalicus (Transvaal thick-tailed scorpion)).